The sequence spans 316 residues: Aspartate carbamoyltransferase catalytic subunit (316 aa).

Carbamoyl phosphate is bound by residues Arg-59 and Thr-60. Lys-88 serves as a coordination point for L-aspartate. Carbamoyl phosphate contacts are provided by Arg-109, His-137, and Gln-140. Positions 170 and 232 each coordinate L-aspartate. Leu-269 and Pro-270 together coordinate carbamoyl phosphate.

It belongs to the aspartate/ornithine carbamoyltransferase superfamily. ATCase family. Heterooligomer of catalytic and regulatory chains.

The enzyme catalyses carbamoyl phosphate + L-aspartate = N-carbamoyl-L-aspartate + phosphate + H(+). The protein operates within pyrimidine metabolism; UMP biosynthesis via de novo pathway; (S)-dihydroorotate from bicarbonate: step 2/3. Functionally, catalyzes the condensation of carbamoyl phosphate and aspartate to form carbamoyl aspartate and inorganic phosphate, the committed step in the de novo pyrimidine nucleotide biosynthesis pathway. In Methanobrevibacter smithii (strain ATCC 35061 / DSM 861 / OCM 144 / PS), this protein is Aspartate carbamoyltransferase catalytic subunit.